The primary structure comprises 381 residues: EPS I polysaccharide export outer membrane protein EpsA (381 aa).

Positions 1–23 (MFVSIPNIRKAVVSLSVVPLLAA) are cleaved as a signal peptide. Residue Cys24 is the site of N-palmitoyl cysteine attachment. Cys24 is lipidated: S-diacylglycerol cysteine.

This sequence belongs to the BexD/CtrA/VexA family.

The protein localises to the cell outer membrane. Its function is as follows. Probably involved in polymerization and/or export of exopolysaccharide EPS I which functions as a virulence factor. This Ralstonia nicotianae (strain ATCC BAA-1114 / GMI1000) (Ralstonia solanacearum) protein is EPS I polysaccharide export outer membrane protein EpsA (epsA).